The primary structure comprises 639 residues: DNA mismatch repair protein MutL (639 aa).

Residues 336–392 form a disordered region; sequence SAHDDPTPAISGAARDEEPRGVENRASAGENRFNRPASSPVASAPRPAHVAAPRMPA. A compositionally biased stretch (basic and acidic residues) spans 349–358; that stretch reads ARDEEPRGVE. A compositionally biased stretch (low complexity) spans 370–392; it reads RPASSPVASAPRPAHVAAPRMPA.

This sequence belongs to the DNA mismatch repair MutL/HexB family.

Functionally, this protein is involved in the repair of mismatches in DNA. It is required for dam-dependent methyl-directed DNA mismatch repair. May act as a 'molecular matchmaker', a protein that promotes the formation of a stable complex between two or more DNA-binding proteins in an ATP-dependent manner without itself being part of a final effector complex. This is DNA mismatch repair protein MutL from Edwardsiella ictaluri (strain 93-146).